A 348-amino-acid chain; its full sequence is Mycothiol acetyltransferase (348 aa).

N-acetyltransferase domains follow at residues T12–T156 and V169–P330. E44 is a binding site for 1D-myo-inositol 2-(L-cysteinylamino)-2-deoxy-alpha-D-glucopyranoside. Residue L91–V93 coordinates acetyl-CoA. 1D-myo-inositol 2-(L-cysteinylamino)-2-deoxy-alpha-D-glucopyranoside contacts are provided by E196, K235, and E253. Acetyl-CoA-binding positions include V257–V259 and Q264–R270. Y291 contacts 1D-myo-inositol 2-(L-cysteinylamino)-2-deoxy-alpha-D-glucopyranoside. N296–H301 provides a ligand contact to acetyl-CoA. The segment at P320–S348 is disordered. The span at D336–S348 shows a compositional bias: polar residues.

It belongs to the acetyltransferase family. MshD subfamily. In terms of assembly, monomer.

It catalyses the reaction 1D-myo-inositol 2-(L-cysteinylamino)-2-deoxy-alpha-D-glucopyranoside + acetyl-CoA = mycothiol + CoA + H(+). Functionally, catalyzes the transfer of acetyl from acetyl-CoA to desacetylmycothiol (Cys-GlcN-Ins) to form mycothiol. This is Mycothiol acetyltransferase from Cellulomonas flavigena (strain ATCC 482 / DSM 20109 / BCRC 11376 / JCM 18109 / NBRC 3775 / NCIMB 8073 / NRS 134).